A 422-amino-acid polypeptide reads, in one-letter code: Serine hydroxymethyltransferase (422 aa).

(6S)-5,6,7,8-tetrahydrofolate contacts are provided by residues Leu118 and 122 to 124 (GHL). At Lys227 the chain carries N6-(pyridoxal phosphate)lysine. Residues Glu243 and 351–353 (SPF) each bind (6S)-5,6,7,8-tetrahydrofolate.

The protein belongs to the SHMT family. Homodimer. Pyridoxal 5'-phosphate is required as a cofactor.

The protein resides in the cytoplasm. The catalysed reaction is (6R)-5,10-methylene-5,6,7,8-tetrahydrofolate + glycine + H2O = (6S)-5,6,7,8-tetrahydrofolate + L-serine. The protein operates within one-carbon metabolism; tetrahydrofolate interconversion. Its pathway is amino-acid biosynthesis; glycine biosynthesis; glycine from L-serine: step 1/1. In terms of biological role, catalyzes the reversible interconversion of serine and glycine with tetrahydrofolate (THF) serving as the one-carbon carrier. This reaction serves as the major source of one-carbon groups required for the biosynthesis of purines, thymidylate, methionine, and other important biomolecules. Also exhibits THF-independent aldolase activity toward beta-hydroxyamino acids, producing glycine and aldehydes, via a retro-aldol mechanism. The chain is Serine hydroxymethyltransferase from Fervidobacterium nodosum (strain ATCC 35602 / DSM 5306 / Rt17-B1).